A 395-amino-acid chain; its full sequence is NAC domain-containing protein 7 (395 aa).

The NAC domain occupies 7–156 (VPPGFRFHPT…GWVVCRVFKK (150 aa)). The DNA-binding element occupies 107–162 (IGMRKTLVFYKGRAPNGQKSDWIMHEYRLETDENGTPQEEGWVVCRVFKKRLAAVR). Polar residues-rich tracts occupy residues 344–362 (AATASASIQNNAKDTSNAE) and 382–395 (TASTSSSCQIDLWK). A disordered region spans residues 344–395 (AATASASIQNNAKDTSNAEYQVDEEKDPKRASDMGEEYTASTSSSCQIDLWK).

Belongs to the plant vascular related NAC-domain protein family. As to quaternary structure, interacts with NAC083/VNI2. Expressed in root, shoot and hypocotyl vascular elements, columella root caps, epidermal and cortex root cells and root-hypocotyl junctions. Observed predominantly in root imature xylem vessels. Present in root developing xylems. Specifically expressed in vessels in the secondary xylem of the root-hypocotyl region, and in vessels but not in interfascicular fibers in stems.

It localises to the nucleus. In terms of biological role, transcription activator that binds to the secondary wall NAC binding element (SNBE), 5'-(T/A)NN(C/T)(T/C/G)TNNNNNNNA(A/C)GN(A/C/T)(A/T)-3', in the promoter of target genes. Involved in xylem formation by promoting the expression of secondary wall-associated transcription factors and of genes involved in secondary wall biosynthesis and programmed cell death, genes driven by the secondary wall NAC binding element (SNBE). Triggers thickening of secondary walls. In Arabidopsis thaliana (Mouse-ear cress), this protein is NAC domain-containing protein 7.